Reading from the N-terminus, the 975-residue chain is MASNNVAQFAAELKMPAGVLLEQLQAAGVQKASEDDALSETDKARLLDHLRKSHGATDGDKRKITLTRRHTSEIKQADATGKARTIQVEVRKKRTFVKRDDVSETGADQAQAQTDEQAEAELKRREEEARREAELLEKQAQELRERQERLEREEAERRAREEAAEAERRRAEEEAAAKRAAAAQAEAAQQAAAAREQAQRAQSEPAEQSAQDEARAAAERAAQREAAKKAEDAAREAADKARAEQEEIRKRREAAEAEARAIREMMNTPRRAQVKAVEPPKPAEPPAAKAAEAKGTLHKPAKPAGEAAAARPAAKKPASGAPAPAAAPAGDRTKKPGTGKSGWQDDAAKRRGIKTRGDSSGGVDRGWRGGPKGRGKHQDSASSFQAPTEPIVREVHVPETISVADLAHKMSIKASEVIKVMMKMGQMVTINQVLDQETAMIVVEELGHRALAAKLDDPEALLVEGEIGSDAEQLPRPPVVTVMGHVDHGKTSLLDYIRRAKVAAGEAGGITQHIGAYHVETPRGVVTFLDTPGHEAFTAMRARGAKATDIVILVVAADDGVMPQTKEAISHAKAGGVPIVVAINKIDKPEANPDRVKQELVAEGVVPEEYGGDSPFVPVSAKTGAGIDDLLENVLLQAEVLELKAPVESPAKGIVIEAKLDKGKGPVATVLVQSGTLSRGDVVLAGTAYGRVRAMLDENGKPTKEAGPSIPVEIQGLSEVPGAGDEVIVLPDERKAREIALFRQGKFRDVKLAKQQAAKLESMLEQMGEGEVQNLPLIIKADVQGSQEALVQSLLKLSTDEVRVQIVHSAVGGISESDVNLATASKAVIIGFNTRADAQARKLAEANGIDIRYYNIIYDAVDEVKAAMSGMLAPEKREVVTGMVEVRQVFKVPKVGTVAGCMVTDGVVKRSSSVRVLRNNVVIFTGELDSLKRFKDDVKEVKQGFECGMSLKNFNDIVEGDQFEVFEVTEVARTL.

Residues 48 to 63 (DHLRKSHGATDGDKRK) show a composition bias toward basic and acidic residues. 2 disordered regions span residues 48–84 (DHLR…GKAR) and 98–388 (KRDD…QAPT). Over residues 104–115 (ETGADQAQAQTD) the composition is skewed to low complexity. The segment covering 120-177 (AELKRREEEARREAELLEKQAQELRERQERLEREEAERRAREEAAEAERRRAEEEAAA) has biased composition (basic and acidic residues). A compositionally biased stretch (low complexity) spans 178 to 211 (KRAAAAQAEAAQQAAAAREQAQRAQSEPAEQSAQ). The segment covering 212 to 263 (DEARAAAERAAQREAAKKAEDAAREAADKARAEQEEIRKRREAAEAEARAIR) has biased composition (basic and acidic residues). Low complexity predominate over residues 302–330 (KPAGEAAAARPAAKKPASGAPAPAAAPAG). Residues 359-372 (SSGGVDRGWRGGPK) are compositionally biased toward gly residues. The 170-residue stretch at 475–644 (PRPPVVTVMG…LLQAEVLELK (170 aa)) folds into the tr-type G domain. The G1 stretch occupies residues 484-491 (GHVDHGKT). GTP is bound at residue 484-491 (GHVDHGKT). The segment at 509–513 (GITQH) is G2. The interval 530-533 (DTPG) is G3. GTP-binding positions include 530 to 534 (DTPGH) and 584 to 587 (NKID). The interval 584 to 587 (NKID) is G4. The tract at residues 620–622 (SAK) is G5.

This sequence belongs to the TRAFAC class translation factor GTPase superfamily. Classic translation factor GTPase family. IF-2 subfamily.

The protein localises to the cytoplasm. Its function is as follows. One of the essential components for the initiation of protein synthesis. Protects formylmethionyl-tRNA from spontaneous hydrolysis and promotes its binding to the 30S ribosomal subunits. Also involved in the hydrolysis of GTP during the formation of the 70S ribosomal complex. This chain is Translation initiation factor IF-2, found in Burkholderia mallei (strain NCTC 10247).